The following is a 207-amino-acid chain: Putative 3-methyladenine DNA glycosylase (207 aa).

This sequence belongs to the DNA glycosylase MPG family.

This is Putative 3-methyladenine DNA glycosylase from Listeria monocytogenes serotype 4a (strain HCC23).